Reading from the N-terminus, the 123-residue chain is Small ribosomal subunit protein uS12 (123 aa).

Residues 1-23 are disordered; it reads MPTISQLVKKGREKVEKKTKSPA. Position 89 is a 3-methylthioaspartic acid (aspartate 89).

It belongs to the universal ribosomal protein uS12 family. As to quaternary structure, part of the 30S ribosomal subunit. Contacts proteins S8 and S17. May interact with IF1 in the 30S initiation complex.

Its function is as follows. With S4 and S5 plays an important role in translational accuracy. Interacts with and stabilizes bases of the 16S rRNA that are involved in tRNA selection in the A site and with the mRNA backbone. Located at the interface of the 30S and 50S subunits, it traverses the body of the 30S subunit contacting proteins on the other side and probably holding the rRNA structure together. The combined cluster of proteins S8, S12 and S17 appears to hold together the shoulder and platform of the 30S subunit. The sequence is that of Small ribosomal subunit protein uS12 from Thermodesulfovibrio yellowstonii (strain ATCC 51303 / DSM 11347 / YP87).